Consider the following 418-residue polypeptide: Secreted aspartic protease 5 (418 aa).

Residues 1–18 form the signal peptide; sequence MFLKNILSVLAFALLIDA. A propeptide spans 19-76 (activation peptide); the sequence is APVKRSPGFVTLDFNVKRSLVDPDDPTVEAKRSPLFLEFTPSEFPVDETGRDGDVDKR. The region spanning 90-404 is the Peptidase A1 domain; it reads YTADITVGSD…NLDDKKISMA (315 aa). Residue Asp108 is part of the active site. 108–110 is a pepstatin A binding site; it reads DTG. An intrachain disulfide couples Cys123 to Cys135. 161–162 provides a ligand contact to pepstatin A; sequence GD. Glu268 contributes to the Zn(2+) binding site. Asp294 is an active-site residue. Position 294–298 (294–298) interacts with pepstatin A; the sequence is DSGTT. A disulfide bridge connects residues Cys332 and Cys370.

This sequence belongs to the peptidase A1 family.

It localises to the secreted. The catalysed reaction is Preferential cleavage at the carboxyl of hydrophobic amino acids, but fails to cleave 15-Leu-|-Tyr-16, 16-Tyr-|-Leu-17 and 24-Phe-|-Phe-25 of insulin B chain. Activates trypsinogen, and degrades keratin.. Inhibited by pepstatin A analogs. Secreted aspartic peptidases (SAPs) are a group of ten acidic hydrolases considered as key virulence factors. These enzymes supply the fungus with nutrient amino acids as well as are able to degrade the selected host's proteins involved in the immune defense. Moreover, acts toward human hemoglobin though limited proteolysis to generate a variety of antimicrobial hemocidins, enabling to compete with the other microorganisms of the same physiological niche using the microbicidal peptides generated from the host protein. This chain is Secreted aspartic protease 5, found in Candida albicans (strain SC5314 / ATCC MYA-2876) (Yeast).